Consider the following 283-residue polypeptide: Short-chain dehydrogenase cctT (283 aa).

Residues 1–20 (MLKTVLITGCSHGGLGAAMA) form the signal peptide. 5 residues coordinate NADP(+): Ile7, Thr33, Lys39, Glu55, and Asn83. Asn131 is a glycosylation site (N-linked (GlcNAc...) asparagine). Ser133 acts as the Proton donor in catalysis. Positions 147, 151, 180, and 182 each coordinate NADP(+). Tyr147 functions as the Proton acceptor in the catalytic mechanism.

It belongs to the short-chain dehydrogenases/reductases (SDR) family.

Its function is as follows. Short-chain dehydrogenase; part of the gene cluster that mediates the biosynthesis of the mycotoxin cyclochlorotine, a hepatotoxic and carcinogenic cyclic chlorinated pentapeptide. The function of cctT within the pathway, if any, remains undetermined. The NRPS cctN initially catalyzes the condensation of L-serine (Ser), Pro, L-2-aminobutyrate (2Abu), Ser, and beta-Phe in this order to produce isocyclotine. After the dichlorination of Pro2 catalyzed by cctP2 to produce isocyclochlorotine, the cctO-mediated transacylation of isocyclochlorotine can furnish cyclochlorotine. The subsequent hydroxylation of cyclochlorotine by cctR yields hydroxycyclochlorotine as the final product. CctP1 probably acts as a phenylalanine aminomutase and provides the uncommon building block beta-Phe. Furthermore, 2Abu can be synthesized from threonine by one of the threonine dehydratases and transaminases localized outside of the cluster. The functions of the remaining proteins encoded by the cluster, cctM and cctT, have not been identified yet. This is Short-chain dehydrogenase cctT from Talaromyces islandicus (Penicillium islandicum).